A 241-amino-acid chain; its full sequence is ATP synthase subunit a (241 aa).

7 helical membrane passes run 27–47 (NCSL…CWAL), 52–72 (VVPG…ANTL), 87–107 (VMTT…PFGF), 112–132 (HLSV…VIGF), 142–162 (IFLP…IKLF), 175–195 (LAAN…FVLK), and 198–218 (LVLA…EIFV).

It belongs to the ATPase A chain family. In terms of assembly, F-type ATPases have 2 components, CF(1) - the catalytic core - and CF(0) - the membrane proton channel. CF(1) has five subunits: alpha(3), beta(3), gamma(1), delta(1), epsilon(1). CF(0) has three main subunits: a(1), b(2) and c(9-12). The alpha and beta chains form an alternating ring which encloses part of the gamma chain. CF(1) is attached to CF(0) by a central stalk formed by the gamma and epsilon chains, while a peripheral stalk is formed by the delta and b chains.

It is found in the cell inner membrane. Functionally, key component of the proton channel; it plays a direct role in the translocation of protons across the membrane. This chain is ATP synthase subunit a, found in Anaplasma marginale (strain St. Maries).